A 360-amino-acid polypeptide reads, in one-letter code: 3-isopropylmalate dehydrogenase (360 aa).

76–89 (GPKWDTIERDIRPE) is a binding site for NAD(+). Substrate-binding residues include Arg96, Arg106, Arg134, and Asp224. Asp224, Asp248, and Asp252 together coordinate Mg(2+). Residue 282–294 (GSAPDIAGKGIAN) participates in NAD(+) binding.

It belongs to the isocitrate and isopropylmalate dehydrogenases family. LeuB type 1 subfamily. Homodimer. It depends on Mg(2+) as a cofactor. Mn(2+) serves as cofactor.

It is found in the cytoplasm. It carries out the reaction (2R,3S)-3-isopropylmalate + NAD(+) = 4-methyl-2-oxopentanoate + CO2 + NADH. It functions in the pathway amino-acid biosynthesis; L-leucine biosynthesis; L-leucine from 3-methyl-2-oxobutanoate: step 3/4. Catalyzes the oxidation of 3-carboxy-2-hydroxy-4-methylpentanoate (3-isopropylmalate) to 3-carboxy-4-methyl-2-oxopentanoate. The product decarboxylates to 4-methyl-2 oxopentanoate. The protein is 3-isopropylmalate dehydrogenase of Pseudomonas syringae pv. syringae (strain B728a).